Here is a 1220-residue protein sequence, read N- to C-terminus: Plasma membrane calcium-transporting ATPase 3 (1220 aa).

Polar residues predominate over residues 1–20; sequence MGDMANSSIEFHPKPQQQRD. The tract at residues 1–23 is disordered; sequence MGDMANSSIEFHPKPQQQRDVPQ. At 1-97 the chain is on the cytoplasmic side; the sequence is MGDMANSSIE…NFIPPKQPKT (97 aa). Serine 8 is modified (phosphoserine). The chain crosses the membrane as a helical span at residues 98-118; that stretch reads FLQLVWEALQDVTLIILEVAA. Topologically, residues 119 to 155 are extracellular; it reads IVSLGLSFYAPPGEESEACGNVSGGAEDEGEAEAGWI. The helical transmembrane segment at 156–176 threads the bilayer; it reads EGAAILLSVICVVLVTAFNDW. The Cytoplasmic portion of the chain corresponds to 177–364; that stretch reads SKEKQFRGLQ…KEKSVLQGKL (188 aa). The tract at residues 298 to 355 is disordered; sequence EEEKKDKKGKQQDGAMESSQTKAKKQDGAVAMEMQPLKSAEGGEMEEREKKKANAPKK. Basic and acidic residues-rich tracts occupy residues 299–308 and 342–355; these read EEKKDKKGKQ and MEER…APKK. Residues 365-384 form a helical membrane-spanning segment; the sequence is TKLAVQIGKAGLVMSAITVI. Topologically, residues 385–417 are extracellular; sequence ILVLYFVIETFVVEGRTWLAECTPVYVQYFVKF. Residues 418 to 435 form a helical membrane-spanning segment; it reads FIIGVTVLVVAVPEGLPL. Residues 436–849 lie on the Cytoplasmic side of the membrane; sequence AVTISLAYSV…MWGRNVYDSI (414 aa). The active-site 4-aspartylphosphate intermediate is aspartate 473. Mg(2+) is bound by residues aspartate 794 and aspartate 798. A helical transmembrane segment spans residues 850–869; that stretch reads SKFLQFQLTVNVVAVIVAFT. Residues 870-879 are Extracellular-facing; that stretch reads GACITQDSPL. The chain crosses the membrane as a helical span at residues 880–900; it reads KAVQMLWVNLIMDTFASLALA. Residues 901 to 920 lie on the Cytoplasmic side of the membrane; it reads TEPPTESLLLRKPYGRDKPL. Residues 921-943 traverse the membrane as a helical segment; the sequence is ISRTMMKNILGHAVYQLAIIFTL. Residues 944–961 lie on the Extracellular side of the membrane; sequence LFVGELFFDIDSGRNAPL. Residues 962 to 983 form a helical membrane-spanning segment; it reads HSPPSEHYTIIFNTFVMMQLFN. Over 984–1002 the chain is Cytoplasmic; sequence EINARKIHGERNVFDGIFS. The chain crosses the membrane as a helical span at residues 1003-1024; sequence NPIFCTIVLGTFGIQIVIVQFG. The Extracellular segment spans residues 1025–1034; the sequence is GKPFSCSPLS. Residues 1035-1056 traverse the membrane as a helical segment; it reads TEQWLWCLFVGVGELVWGQVIA. The Cytoplasmic portion of the chain corresponds to 1057–1220; the sequence is TIPTSQLKCL…SPLHSVETSL (164 aa). Position 1079 is a phosphothreonine (threonine 1079). Residues 1097–1114 form a calmodulin-binding subdomain A region; the sequence is LRRGQILWFRGLNRIQTQ. At threonine 1113 the chain carries Phosphothreonine; by PKC. Positions 1115 to 1124 are calmodulin-binding subdomain B; the sequence is IRVVKAFRSS. The tract at residues 1166–1186 is disordered; sequence ENEERLRAPPPPSPNQNNNAI.

This sequence belongs to the cation transport ATPase (P-type) (TC 3.A.3) family. Type IIB subfamily. Interacts with PDZD11. Interacts (via N-terminus) with YWHAE. As to expression, highly expressed in the cerebellum. Expressed in adrenal glands.

It localises to the cell membrane. Its subcellular location is the presynaptic cell membrane. It catalyses the reaction Ca(2+)(in) + ATP + H2O = Ca(2+)(out) + ADP + phosphate + H(+). Its activity is regulated as follows. Down-regulated by YWHAE. Its function is as follows. ATP-driven Ca(2+) ion pump involved in the maintenance of basal intracellular Ca(2+) levels at the presynaptic terminals. Uses ATP as an energy source to transport cytosolic Ca(2+) ions across the plasma membrane to the extracellular compartment. May counter-transport protons, but the mechanism and the stoichiometry of this Ca(2+)/H(+) exchange remains to be established. The protein is Plasma membrane calcium-transporting ATPase 3 of Homo sapiens (Human).